A 198-amino-acid polypeptide reads, in one-letter code: Nucleoside triphosphate pyrophosphatase (198 aa).

Catalysis depends on Asp70, which acts as the Proton acceptor.

It belongs to the Maf family. The cofactor is a divalent metal cation.

It localises to the cytoplasm. The enzyme catalyses a ribonucleoside 5'-triphosphate + H2O = a ribonucleoside 5'-phosphate + diphosphate + H(+). It carries out the reaction a 2'-deoxyribonucleoside 5'-triphosphate + H2O = a 2'-deoxyribonucleoside 5'-phosphate + diphosphate + H(+). Functionally, nucleoside triphosphate pyrophosphatase. May have a dual role in cell division arrest and in preventing the incorporation of modified nucleotides into cellular nucleic acids. The chain is Nucleoside triphosphate pyrophosphatase from Thermosynechococcus vestitus (strain NIES-2133 / IAM M-273 / BP-1).